A 259-amino-acid polypeptide reads, in one-letter code: Thiazole synthase (259 aa).

Lys-99 functions as the Schiff-base intermediate with DXP in the catalytic mechanism. 1-deoxy-D-xylulose 5-phosphate contacts are provided by residues Gly-161, 187 to 188 (AG), and 209 to 210 (NT).

This sequence belongs to the ThiG family. Homotetramer. Forms heterodimers with either ThiH or ThiS.

The protein localises to the cytoplasm. The enzyme catalyses [ThiS sulfur-carrier protein]-C-terminal-Gly-aminoethanethioate + 2-iminoacetate + 1-deoxy-D-xylulose 5-phosphate = [ThiS sulfur-carrier protein]-C-terminal Gly-Gly + 2-[(2R,5Z)-2-carboxy-4-methylthiazol-5(2H)-ylidene]ethyl phosphate + 2 H2O + H(+). It participates in cofactor biosynthesis; thiamine diphosphate biosynthesis. Functionally, catalyzes the rearrangement of 1-deoxy-D-xylulose 5-phosphate (DXP) to produce the thiazole phosphate moiety of thiamine. Sulfur is provided by the thiocarboxylate moiety of the carrier protein ThiS. In vitro, sulfur can be provided by H(2)S. The sequence is that of Thiazole synthase from Nitratiruptor sp. (strain SB155-2).